We begin with the raw amino-acid sequence, 468 residues long: Ribosomal protein uS12 methylthiotransferase RimO (468 aa).

One can recognise an MTTase N-terminal domain in the interval Pro18 to Ala129. [4Fe-4S] cluster-binding residues include Cys27, Cys63, Cys92, Cys167, Cys171, and Cys174. The Radical SAM core domain occupies Thr153–Ala382. Residues Ala385–Gly456 enclose the TRAM domain.

This sequence belongs to the methylthiotransferase family. RimO subfamily. It depends on [4Fe-4S] cluster as a cofactor.

The protein resides in the cytoplasm. The catalysed reaction is L-aspartate(89)-[ribosomal protein uS12]-hydrogen + (sulfur carrier)-SH + AH2 + 2 S-adenosyl-L-methionine = 3-methylsulfanyl-L-aspartate(89)-[ribosomal protein uS12]-hydrogen + (sulfur carrier)-H + 5'-deoxyadenosine + L-methionine + A + S-adenosyl-L-homocysteine + 2 H(+). Its function is as follows. Catalyzes the methylthiolation of an aspartic acid residue of ribosomal protein uS12. The chain is Ribosomal protein uS12 methylthiotransferase RimO from Synechococcus sp. (strain WH7803).